Here is a 170-residue protein sequence, read N- to C-terminus: MKDNERRILLGRVVGGFGLRGEIKIESWTEPRDAIFRYQPWLLRSPTGTESMLNGARGYETGKRLIATFPGINDRNGVEAICGTEIYVPRSALPPPHPDEYYWVDLEGLQVHTLEGVVLGSVSHLFSNGANDVIVIHGERERLIPFVQPDYVKSVDFEAERIVVDWDPEF.

In terms of domain architecture, PRC barrel spans histidine 97–phenylalanine 170.

This sequence belongs to the RimM family. Binds ribosomal protein uS19.

It localises to the cytoplasm. In terms of biological role, an accessory protein needed during the final step in the assembly of 30S ribosomal subunit, possibly for assembly of the head region. Essential for efficient processing of 16S rRNA. May be needed both before and after RbfA during the maturation of 16S rRNA. It has affinity for free ribosomal 30S subunits but not for 70S ribosomes. The sequence is that of Ribosome maturation factor RimM from Xylella fastidiosa (strain M23).